A 318-amino-acid chain; its full sequence is tRNA uridine(34) hydroxylase (318 aa).

Residues 123–217 (EDDDTVIIDA…YGKDPETKGE (95 aa)) form the Rhodanese domain. Cysteine 177 serves as the catalytic Cysteine persulfide intermediate.

It belongs to the TrhO family.

It catalyses the reaction uridine(34) in tRNA + AH2 + O2 = 5-hydroxyuridine(34) in tRNA + A + H2O. Functionally, catalyzes oxygen-dependent 5-hydroxyuridine (ho5U) modification at position 34 in tRNAs. In Staphylococcus aureus (strain USA300), this protein is tRNA uridine(34) hydroxylase.